A 475-amino-acid polypeptide reads, in one-letter code: Ribulose bisphosphate carboxylase large chain (475 aa).

The propeptide occupies 1–2; that stretch reads MS. Proline 3 carries the post-translational modification N-acetylproline. An N6,N6,N6-trimethyllysine modification is found at lysine 14. Substrate-binding residues include asparagine 123 and threonine 173. Lysine 175 functions as the Proton acceptor in the catalytic mechanism. Lysine 177 contributes to the substrate binding site. Positions 201, 203, and 204 each coordinate Mg(2+). Position 201 is an N6-carboxylysine (lysine 201). Histidine 294 functions as the Proton acceptor in the catalytic mechanism. Positions 295, 327, and 379 each coordinate substrate.

It belongs to the RuBisCO large chain family. Type I subfamily. In terms of assembly, heterohexadecamer of 8 large chains and 8 small chains; disulfide-linked. The disulfide link is formed within the large subunit homodimers. Mg(2+) serves as cofactor. Post-translationally, the disulfide bond which can form in the large chain dimeric partners within the hexadecamer appears to be associated with oxidative stress and protein turnover.

It is found in the plastid. Its subcellular location is the chloroplast. The enzyme catalyses 2 (2R)-3-phosphoglycerate + 2 H(+) = D-ribulose 1,5-bisphosphate + CO2 + H2O. The catalysed reaction is D-ribulose 1,5-bisphosphate + O2 = 2-phosphoglycolate + (2R)-3-phosphoglycerate + 2 H(+). RuBisCO catalyzes two reactions: the carboxylation of D-ribulose 1,5-bisphosphate, the primary event in carbon dioxide fixation, as well as the oxidative fragmentation of the pentose substrate in the photorespiration process. Both reactions occur simultaneously and in competition at the same active site. This Bouvardia ternifolia (Firecrackerbush) protein is Ribulose bisphosphate carboxylase large chain.